The chain runs to 460 residues: Inner membrane symporter YicJ (460 aa).

The Periplasmic portion of the chain corresponds to methionine 1 to lysine 11. The next 2 helical transmembrane spans lie at isoleucine 12 to methionine 32 and methionine 33 to valine 53. The Periplasmic portion of the chain corresponds to alanine 54–arginine 80. Residues proline 81–proline 101 traverse the membrane as a helical segment. Residues aspartate 102 to tyrosine 116 lie on the Cytoplasmic side of the membrane. A helical transmembrane segment spans residues threonine 117 to isoleucine 137. The Periplasmic segment spans residues threonine 138 to phenylalanine 152. A helical membrane pass occupies residues valine 153–isoleucine 173. Residues glycine 174–glycine 181 are Cytoplasmic-facing. A helical membrane pass occupies residues phenylalanine 182–phenylalanine 202. Topologically, residues threonine 203–glycine 248 are periplasmic. Residues glycine 249–leucine 269 traverse the membrane as a helical segment. Residues threonine 270–aspartate 288 lie on the Cytoplasmic side of the membrane. Residues tryptophan 289–alanine 309 form a helical membrane-spanning segment. Position 310 (methionine 310) is a topological domain, periplasmic. The chain crosses the membrane as a helical span at residues phenylalanine 311–leucine 331. The Cytoplasmic portion of the chain corresponds to histidine 332–threonine 366. Residues leucine 367–tyrosine 387 traverse the membrane as a helical segment. The Periplasmic portion of the chain corresponds to glycine 388–serine 403. The chain crosses the membrane as a helical span at residues isoleucine 404–alanine 424. The Cytoplasmic segment spans residues lysine 425 to asparagine 460.

This sequence belongs to the sodium:galactoside symporter (TC 2.A.2) family.

It localises to the cell inner membrane. The sequence is that of Inner membrane symporter YicJ (yicJ) from Escherichia coli (strain K12).